Reading from the N-terminus, the 501-residue chain is Dipeptide and tripeptide permease A (501 aa).

Residues 1–21 (MSTANKKPTESVSLNAFKQPK) lie on the Cytoplasmic side of the membrane. A helical transmembrane segment spans residues 22 to 44 (AFYLIFSIELWERFGYYGLQGIM). Residues 45-59 (AVYLVKQLGMSEADS) are Periplasmic-facing. A helical membrane pass occupies residues 60–80 (ITLFSSFSALVYGLVAIGGWL). Topologically, residues 81 to 89 (GDKILGTKR) are cytoplasmic. A helical membrane pass occupies residues 90-110 (VIMLGAVVLAIGYALVAWSGH). Position 111 (D111) is a topological domain, periplasmic. A helical transmembrane segment spans residues 112 to 132 (AGIVYMGMAAIAVGNGLFKAN). Residues 133 to 153 (PSSLLSTCYAKDDPRLDGAFT) lie on the Cytoplasmic side of the membrane. A helical transmembrane segment spans residues 154 to 174 (MYYMSVNIGSFFSMLATPWLA). Residues 175–178 (ARYG) lie on the Periplasmic side of the membrane. Residues 179–199 (WSTAFALSVVGMLITVVNFAF) traverse the membrane as a helical segment. The Cytoplasmic portion of the chain corresponds to 200–219 (CQRWVKSYGSKPDFEPINFR). The chain crosses the membrane as a helical span at residues 220–240 (NLLLTIVGIVVLIAVATWLLH). The Periplasmic portion of the chain corresponds to 241–246 (NQDIAR). A helical transmembrane segment spans residues 247–267 (MVLGVIALGIVIIFGKEAFSM). The Cytoplasmic segment spans residues 268–274 (HGAARRK). Residues 275–295 (MIVAFILMLQAIIFFVLYSQM) form a helical membrane-spanning segment. Residues 296-320 (PTSLNFFAIRNVEHSILGIAFEPEQ) lie on the Periplasmic side of the membrane. Residues 321 to 341 (YQALNPFWIITGSPILAAIYN) form a helical membrane-spanning segment. Topologically, residues 342–352 (RMGDTLPMPMK) are cytoplasmic. A helical transmembrane segment spans residues 353-373 (FAIGMVLCSGAFLILPLGAKF). Over 374-383 (ANDAGIVSVN) the chain is Periplasmic. The helical transmembrane segment at 384–404 (WLIASYGLQSIGELMISGLGL) threads the bilayer. The Cytoplasmic portion of the chain corresponds to 405 to 414 (AMVAQLVPQR). A helical membrane pass occupies residues 415–435 (LMGFIMGSWFLTTAGANIIGG). At 436-459 (YVANLMAVPSDVTDPLMSLEVYGR) the chain is on the periplasmic side. The chain crosses the membrane as a helical span at residues 460–480 (VFMQIGIATAVIAVLMLLTAP). The Cytoplasmic portion of the chain corresponds to 481-501 (KLNRMTQDDDTAEKGSKAATV).

This sequence belongs to the major facilitator superfamily. Proton-dependent oligopeptide transporter (POT/PTR) (TC 2.A.17) family. DtpA subfamily.

It localises to the cell inner membrane. Proton-dependent permease that transports di- and tripeptides. The sequence is that of Dipeptide and tripeptide permease A from Salmonella typhi.